A 93-amino-acid polypeptide reads, in one-letter code: Small ribosomal subunit protein uS19 (93 aa).

Residues 74-93 (FSPTRTFRGHVKDDRKSKRR) form a disordered region. The span at 83 to 93 (HVKDDRKSKRR) shows a compositional bias: basic and acidic residues.

The protein belongs to the universal ribosomal protein uS19 family.

Functionally, protein S19 forms a complex with S13 that binds strongly to the 16S ribosomal RNA. This Streptomyces griseus subsp. griseus (strain JCM 4626 / CBS 651.72 / NBRC 13350 / KCC S-0626 / ISP 5235) protein is Small ribosomal subunit protein uS19.